Here is a 227-residue protein sequence, read N- to C-terminus: Guanylate kinase (227 aa).

One can recognise a Guanylate kinase-like domain in the interval 21-199 (GNLFMVVAPS…ALAELECIVA (179 aa)). 28–35 (APSGAGKS) is an ATP binding site.

It belongs to the guanylate kinase family.

The protein resides in the cytoplasm. It carries out the reaction GMP + ATP = GDP + ADP. Its function is as follows. Essential for recycling GMP and indirectly, cGMP. This chain is Guanylate kinase, found in Burkholderia orbicola (strain AU 1054).